Here is a 421-residue protein sequence, read N- to C-terminus: Imidazolonepropionase (421 aa).

H80 and H82 together coordinate Fe(3+). Positions 80 and 82 each coordinate Zn(2+). The 4-imidazolone-5-propanoate site is built by R89, Y152, and H185. Residue Y152 coordinates N-formimidoyl-L-glutamate. H249 lines the Fe(3+) pocket. Residue H249 coordinates Zn(2+). E252 serves as a coordination point for 4-imidazolone-5-propanoate. Fe(3+) is bound at residue D324. Position 324 (D324) interacts with Zn(2+). N326 and G328 together coordinate N-formimidoyl-L-glutamate. S329 provides a ligand contact to 4-imidazolone-5-propanoate.

This sequence belongs to the metallo-dependent hydrolases superfamily. HutI family. In terms of assembly, homodimer. It depends on Zn(2+) as a cofactor. Fe(3+) is required as a cofactor.

It localises to the cytoplasm. The catalysed reaction is 4-imidazolone-5-propanoate + H2O = N-formimidoyl-L-glutamate. Its pathway is amino-acid degradation; L-histidine degradation into L-glutamate; N-formimidoyl-L-glutamate from L-histidine: step 3/3. Catalyzes the hydrolytic cleavage of the carbon-nitrogen bond in imidazolone-5-propanoate to yield N-formimidoyl-L-glutamate. It is the third step in the universal histidine degradation pathway. The polypeptide is Imidazolonepropionase (Bacillus subtilis (strain 168)).